A 184-amino-acid chain; its full sequence is NADH-dependent flavin reductase subunit 2 (184 aa).

Belongs to the NADH-dependent flavin reductase family. As to quaternary structure, requires LJ_0548 for activity, but the exact composition of the enzyme is unclear.

It carries out the reaction a reduced flavin + NAD(+) = an oxidized flavin + NADH + 2 H(+). In terms of biological role, component of an enzyme that catalyzes the reduction of free flavins (FMN, FAD and riboflavin) by NADH; the reduced flavins produced by this reaction likely spontaneously react with oxygen, yielding hydrogen peroxide. Is responsible for the major H(2)O(2) production in L.johnsonii in the presence of oxygen. Cannot use NADPH instead of NADH as the electron donor. This chain is NADH-dependent flavin reductase subunit 2 (nfr2), found in Lactobacillus johnsonii (strain CNCM I-12250 / La1 / NCC 533).